We begin with the raw amino-acid sequence, 822 residues long: ATP-dependent zinc metalloprotease FTSH 7, chloroplastic (822 aa).

Low complexity-rich tracts occupy residues Met1–Ser34, Ala80–Gly94, and Ala101–Thr122. 2 disordered regions span residues Met1 to Arg44 and Pro67 to Trp136. The transit peptide at Met1–Arg70 directs the protein to the chloroplast. The next 2 helical transmembrane spans lie at Ile154–Leu174 and Gly288–Leu308. Residue Gly386 to Thr393 coordinates ATP. Residue His611 coordinates Zn(2+). Glu612 is a catalytic residue. Positions 615 and 694 each coordinate Zn(2+).

The protein in the N-terminal section; belongs to the AAA ATPase family. In the C-terminal section; belongs to the peptidase M41 family. Zn(2+) serves as cofactor.

Its subcellular location is the plastid. It localises to the chloroplast thylakoid membrane. Functionally, probable ATP-dependent zinc metallopeptidase. This is ATP-dependent zinc metalloprotease FTSH 7, chloroplastic (FTSH7) from Oryza sativa subsp. japonica (Rice).